The chain runs to 666 residues: Probable potassium transport system protein Kup (666 aa).

12 helical membrane passes run G16–M36, I58–L78, P100–T120, I141–G161, F165–L185, I221–L241, W253–A273, V294–G314, L343–F363, Y373–I393, P399–A419, and F424–I444.

It belongs to the HAK/KUP transporter (TC 2.A.72) family.

It is found in the cell membrane. It carries out the reaction K(+)(in) + H(+)(in) = K(+)(out) + H(+)(out). In terms of biological role, transport of potassium into the cell. Likely operates as a K(+):H(+) symporter. The chain is Probable potassium transport system protein Kup from Streptococcus pyogenes serotype M4 (strain MGAS10750).